The following is a 637-amino-acid chain: Chaperone protein HtpG (637 aa).

Residues 1 to 345 are a; substrate-binding; that stretch reads MSQQETHGFQ…SNDLPLNVSR (345 aa). The b stretch occupies residues 346–562; it reads EILQDNHITK…EGEMSTQMIK (217 aa). A c region spans residues 563–637; it reads LMQAAGQPVP…MNQMLLANMK (75 aa).

It belongs to the heat shock protein 90 family. Homodimer.

Its subcellular location is the cytoplasm. Molecular chaperone. Has ATPase activity. In Shewanella putrefaciens (strain CN-32 / ATCC BAA-453), this protein is Chaperone protein HtpG.